The primary structure comprises 246 residues: UDP-N-acetyl-D-mannosaminuronic acid transferase (246 aa).

This sequence belongs to the glycosyltransferase 26 family.

It catalyses the reaction UDP-N-acetyl-alpha-D-mannosaminouronate + N-acetyl-alpha-D-glucosaminyl-di-trans,octa-cis-undecaprenyl diphosphate = beta-D-ManNAcA-(1-&gt;4)-alpha-D-GlcNAc-di-trans,octa-cis-undecaprenyl diphosphate + UDP + H(+). It functions in the pathway bacterial outer membrane biogenesis; enterobacterial common antigen biosynthesis. Catalyzes the synthesis of Und-PP-GlcNAc-ManNAcA (Lipid II), the second lipid-linked intermediate involved in enterobacterial common antigen (ECA) synthesis. The sequence is that of UDP-N-acetyl-D-mannosaminuronic acid transferase from Shigella flexneri.